A 782-amino-acid polypeptide reads, in one-letter code: Pyridoxal-dependent decarboxylase domain-containing protein 1 (782 aa).

Residues 26–48 (ILEDNQRPSEEEKDGKKYTRKDI) are compositionally biased toward basic and acidic residues. Disordered regions lie at residues 26–56 (ILED…QGSG), 673–695 (QTTG…AGQK), 702–721 (RNSD…EVES), and 726–782 (PMPE…DSLR). Composition is skewed to polar residues over residues 703 to 714 (NSDAMSETSSIS) and 747 to 782 (AEQS…DSLR).

This sequence belongs to the group II decarboxylase family. Pyridoxal 5'-phosphate is required as a cofactor.

This Xenopus laevis (African clawed frog) protein is Pyridoxal-dependent decarboxylase domain-containing protein 1 (pdxdc1).